The chain runs to 713 residues: Constitutive lysine decarboxylase (713 aa).

Lysine 367 is subject to N6-(pyridoxal phosphate)lysine.

The protein belongs to the Orn/Lys/Arg decarboxylase class-I family. In terms of assembly, homodecamer; built of five dimers associated in a 5-fold symmetrical double-ring. Pyridoxal 5'-phosphate is required as a cofactor.

The catalysed reaction is L-lysine + H(+) = cadaverine + CO2. In terms of biological role, plays a role in lysine utilization by acting as a lysine decarboxylase. The polypeptide is Constitutive lysine decarboxylase (ldcC) (Escherichia coli (strain K12)).